A 1265-amino-acid chain; its full sequence is Protein diaphanous homolog 1 (1265 aa).

M1 is subject to N-acetylmethionine. Positions 1–12 (MEPSGGGLGPGR) are enriched in gly residues. Disordered stretches follow at residues 1 to 42 (MEPS…FTLK) and 54 to 83 (SMRIKKEKEKPNSAHRNSSASYGDDPTAQS). S22 is modified (phosphoserine). A compositionally biased stretch (basic and acidic residues) spans 54 to 65 (SMRIKKEKEKPN). The span at 67-83 (AHRNSSASYGDDPTAQS) shows a compositional bias: polar residues. The region spanning 84–449 (LQDISDDQVL…QIVLHKNGTD (366 aa)) is the GBD/FH3 domain. The stretch at 474 to 568 (VEKSEAKATE…KKEMASLSAV (95 aa)) forms a coiled coil. Residues 573 to 742 (SVSSSAAVPQ…PPPPGMGVPP (170 aa)) are disordered. 2 stretches are compositionally biased toward pro residues: residues 594–628 (IPPPPPPPLPGGAVPPPPPPPLPAGTGIPPPPPLP) and 645–742 (IPPP…GVPP). In terms of domain architecture, FH1 spans 625 to 757 (PPLPGGACIS…FGIPAAPVLP (133 aa)). Position 761 is a phosphothreonine (T761). One can recognise an FH2 domain in the interval 762–1164 (PKKVYKPEVQ…MRRAKLAKEK (403 aa)). K1050 and K1096 each carry N6-acetyllysine. Y1114 is modified (phosphotyrosine). A coiled-coil region spans residues 1141-1185 (AVKENQKRRETEEKMRRAKLAKEKAEKERLEKQQKREQLIDMNAE). Positions 1187–1215 (DETGVMDSLLEALQSGAAFRRKRGPRQVN) constitute a DAD domain. S1247 is modified (phosphoserine).

It belongs to the formin homology family. Diaphanous subfamily. As to quaternary structure, homodimer. Interacts with the GTP-bound form of RHOA. Interacts with RHOC, PFY1, MAPRE1, BAIAP2 and APC. Interacts with SCAI. Interacts with DCAF7, via FH2 domain. Interacts with NCDN. Interacts with OSBPL10, OSBPL2, VIM, TUBB and DYN1. In terms of processing, phosphorylation at Thr-761 is stimulated by cAMP and regulates stability, complex formation and mitochondrial movement. In terms of tissue distribution, expressed in testis. Present in Sertoli cells (at protein level).

Its subcellular location is the cell membrane. It is found in the cell projection. The protein localises to the ruffle membrane. The protein resides in the cytoplasm. It localises to the cytoskeleton. Its subcellular location is the microtubule organizing center. It is found in the centrosome. The protein localises to the spindle. The protein resides in the nucleus. Actin nucleation and elongation factor required for the assembly of F-actin structures, such as actin cables and stress fibers. Binds to the barbed end of the actin filament and slows down actin polymerization and depolymerization. Required for cytokinesis, and transcriptional activation of the serum response factor. DFR proteins couple Rho and Src tyrosine kinase during signaling and the regulation of actin dynamics. Functions as a scaffold protein for MAPRE1 and APC to stabilize microtubules and promote cell migration. Has neurite outgrowth promoting activity. Acts in a Rho-dependent manner to recruit PFY1 to the membrane. The MEMO1-RHOA-DIAPH1 signaling pathway plays an important role in ERBB2-dependent stabilization of microtubules at the cell cortex. It controls the localization of APC and CLASP2 to the cell membrane, via the regulation of GSK3B activity. In turn, membrane-bound APC allows the localization of the MACF1 to the cell membrane, which is required for microtubule capture and stabilization. Plays a role in the regulation of cell morphology and cytoskeletal organization. Required in the control of cell shape. Also acts as an actin nucleation and elongation factor in the nucleus by promoting nuclear actin polymerization inside the nucleus to drive serum-dependent SRF-MRTFA activity. The polypeptide is Protein diaphanous homolog 1 (Rattus norvegicus (Rat)).